The sequence spans 302 residues: GATA transcription factor 28 (302 aa).

The disordered stretch occupies residues 47-66 (NAGGMSEGVETDIPSHPGNV). Positions 77 to 112 (GSEQGDQLTLSFQGQVYVFDSVLPEKVQAVLLLLGG) constitute a Tify domain. A disordered region spans residues 119–141 (APPGLGSPHQNNRVSSLPGTPQR). Residues 126–141 (PHQNNRVSSLPGTPQR) are compositionally biased toward polar residues. The CCT domain maps to 147-189 (RLASLVRFREKRKGRNFDKKIRYTVRKEVALRMQRNKGQFTSA). A GATA-type zinc finger spans residues 217-273 (QHQEISCRHCGIGEKSTPMMRRGPAGPRTLCNACGLMWANKGAFRDLSKASPQTAQN).

Belongs to the type IV zinc-finger family. Class C subfamily. In terms of tissue distribution, predominantly expressed in shoot apices, inflorescences and roots.

It localises to the nucleus. Its function is as follows. Transcriptional activator that specifically binds 5'-GATA-3' or 5'-GAT-3' motifs within gene promoters. The protein is GATA transcription factor 28 (GATA28) of Arabidopsis thaliana (Mouse-ear cress).